Reading from the N-terminus, the 1046-residue chain is SWI/SNF-related matrix-associated actin-dependent regulator of chromatin subfamily A member 1 (1046 aa).

Residues 27-61 (EQPGPSTFKEEGAAAAATEGTTATEKGEKKEKITS) are disordered. Residues 39-50 (AAAAATEGTTAT) show a composition bias toward low complexity. Residues S120 and S123 each carry the phosphoserine modification. Residues 199-364 (ISLYENGVNG…WALLNFLLPD (166 aa)) enclose the Helicase ATP-binding domain. Residue 212-219 (DEMGLGKT) participates in ATP binding. A DEAH box motif is present at residues 315–318 (DEAH). Residues 494 to 645 (ALDKLLARIK…SIVIQQGRLI (152 aa)) enclose the Helicase C-terminal domain. Residues K654, K720, and K742 each participate in a glycyl lysine isopeptide (Lys-Gly) (interchain with G-Cter in SUMO2) cross-link. The tract at residues 819–840 (AQREEQKKIDGAEPLTPQETEE) is disordered. Basic and acidic residues predominate over residues 820–829 (QREEQKKIDG). The region spanning 847 to 899 (QGFTNWTKRDFNQFIKANEKYGRDDIDNIAREVEGKSPEEVMEYSAVFWERCN) is the SANT 1 domain. Y946 carries the phosphotyrosine modification. One can recognise an SANT 2 domain in the interval 950–1014 (KGKNYTEEED…QRRCNTLISL (65 aa)). Positions 1003 to 1037 (EFQRRCNTLISLIEKENMEIEERERAEKKKRATKT) form a coiled coil. A disordered region spans residues 1025-1046 (RERAEKKKRATKTPMVKFSAFS).

The protein belongs to the SNF2/RAD54 helicase family. ISWI subfamily. As to quaternary structure, may form homodimers. Component of the ACF-1 ISWI chromatin remodeling complex at least composed of SMARCA1 and BAZ1A, which regulates the spacing of histone octamers on the DNA template to facilitate access to DNA. Within the complex interacts with BAZ1A; the interaction is direct. Component of the WICH-1 ISWI chromatin remodeling complex at least composed of SMARCA1 and BAZ1B/WSTF. Within the complex interacts with BAZ1B/WSTF. Component of the NoRC-1 ISWI chromatin remodeling complex at least composed of SMARCA1 and BAZ2A/TIP5. Within the complex interacts with BAZ2A/TIP5. Component of the BRF-1 ISWI chromatin remodeling complex at least composed of SMARCA1 and BAZ2B. Within the complex interacts with BAZ2B. Component of the NURF-1 ISWI chromatin remodeling complex (also called the nucleosome-remodeling factor (NURF) complex) at least composed of SMARCA1, BPTF, RBBP4 and RBBP7. Within the complex interacts with BPTF. Within the complex interacts with RBBP4 and RBBP7. Component of the CERF-1 ISWI chromatin remodeling complex (also called the CECR2-containing-remodeling factor (CERF) complex) at least composed of CECR2 and SMARCA1. LUZP1 is detected as part of the CERF-1 complex in embryonic stem cells where it is involved in complex stabilization but is not detected in the complex in the testis. Component of the RSF-1 ISWI chromatin remodeling complex at least composed of SMARCA1 and RSF1. Within the complex interacts with RSF1. Interacts with PRLR. Interacts with ERCC6. Predominantly expressed in cortex, cerebellum, ovaries, testes, uterus and placenta.

It localises to the nucleus. The enzyme catalyses ATP + H2O = ADP + phosphate + H(+). Its function is as follows. ATPase that possesses intrinsic ATP-dependent chromatin-remodeling activity. ATPase activity is substrate-dependent, and is increased when nucleosomes are the substrate, but is also catalytically active when DNA alone is the substrate. Catalytic subunit of ISWI chromatin-remodeling complexes, which form ordered nucleosome arrays on chromatin and facilitate access to DNA during DNA-templated processes such as DNA replication, transcription, and repair. Within the ISWI chromatin-remodeling complexes, slides edge- and center-positioned histone octamers away from their original location on the DNA template. Catalytic activity and histone octamer sliding propensity is regulated and determined by components of the ISWI chromatin-remodeling complexes. The BAZ1A-, BAZ1B-, BAZ2A- and BAZ2B-containing ISWI chromatin-remodeling complexes regulate the spacing of nucleosomes along the chromatin and have the ability to slide mononucleosomes to the center of a DNA template. The CECR2- and RSF1-containing ISWI chromatin-remodeling complexes do not have the ability to slide mononucleosomes to the center of a DNA template. Within the NURF-1 and CERF-1 ISWI chromatin remodeling complexes, nucleosomes are the preferred substrate for its ATPase activity. Within the NURF-1 ISWI chromatin-remodeling complex, binds to the promoters of En1 and En2 to positively regulate their expression and promote brain development. May promote neurite outgrowth. May be involved in the development of luteal cells. Facilitates nucleosome assembly during DNA replication, ensuring replication fork progression and genomic stability by preventing replication stress and nascent DNA gaps. The protein is SWI/SNF-related matrix-associated actin-dependent regulator of chromatin subfamily A member 1 (Smarca1) of Mus musculus (Mouse).